Consider the following 600-residue polypeptide: UvrABC system protein C (600 aa).

The GIY-YIG domain occupies glutamate 15 to valine 92. One can recognise a UVR domain in the interval glycine 197–threonine 232.

The protein belongs to the UvrC family. As to quaternary structure, interacts with UvrB in an incision complex.

The protein localises to the cytoplasm. Functionally, the UvrABC repair system catalyzes the recognition and processing of DNA lesions. UvrC both incises the 5' and 3' sides of the lesion. The N-terminal half is responsible for the 3' incision and the C-terminal half is responsible for the 5' incision. The chain is UvrABC system protein C from Lactobacillus helveticus (strain DPC 4571).